Consider the following 320-residue polypeptide: Cytochrome f (320 aa).

Residues 1–35 (MQNRNTFSWVKEQMTRFISVSIMIYVITRTSIANA) form the signal peptide. Tyr36, Cys56, Cys59, and His60 together coordinate heme. A helical transmembrane segment spans residues 286–306 (VQGLLFFLASVILAQIFLVLK).

Belongs to the cytochrome f family. In terms of assembly, the 4 large subunits of the cytochrome b6-f complex are cytochrome b6, subunit IV (17 kDa polypeptide, petD), cytochrome f and the Rieske protein, while the 4 small subunits are PetG, PetL, PetM and PetN. The complex functions as a dimer. It depends on heme as a cofactor.

The protein localises to the plastid. It localises to the chloroplast thylakoid membrane. In terms of biological role, component of the cytochrome b6-f complex, which mediates electron transfer between photosystem II (PSII) and photosystem I (PSI), cyclic electron flow around PSI, and state transitions. The protein is Cytochrome f of Acorus calamus (Sweet flag).